The primary structure comprises 340 residues: Entry-fusion complex protein OPG094 (340 aa).

The disordered stretch occupies residues 1–20; the sequence is MGGGVSVELPKRDPPPGVPT. The N-myristoyl glycine; by host moiety is linked to residue glycine 2. At 2 to 319 the chain is on the virion surface side; that stretch reads GGGVSVELPK…VQHNIKHSFD (318 aa). Residues 320 to 340 traverse the membrane as a helical; Signal-anchor for type II membrane protein segment; the sequence is LKLHLISLLSLLVIWILIVAI.

The protein belongs to the orthopoxvirus OPG086 family. Interacts with OPG143. Component of the entry fusion complex (EFC) composed of OPG053, OPG076, OPG086, OPG094, OPG095, OPG099, OPG107, OPG143, OPG104, OPG147 and OPG155. Except for OPG095 and OPG053, each of the EFC proteins is required for assembly or stability of the complex. In terms of processing, unglycosylated because produced in viral factories instead of the classic ER -Golgi route.

It localises to the virion membrane. Its function is as follows. Component of the entry fusion complex (EFC), which consists of 11 proteins. During cell infection, this complex mediates entry of the virion core into the host cytoplasm by a two-step mechanism consisting of lipid mixing of the viral and cellular membranes and subsequent pore formation. This is Entry-fusion complex protein OPG094 (OPG094) from Homo sapiens (Human).